A 156-amino-acid polypeptide reads, in one-letter code: Peptidyl-prolyl cis-trans isomerase H (156 aa).

Residues threonine 1–glutamate 155 form the PPIase cyclophilin-type domain.

It belongs to the cyclophilin-type PPIase family. PPIase H subfamily.

It localises to the nucleus. The enzyme catalyses [protein]-peptidylproline (omega=180) = [protein]-peptidylproline (omega=0). Its function is as follows. PPIases accelerate the folding of proteins. It catalyzes the cis-trans isomerization of proline imidic peptide bonds in oligopeptides. This chain is Peptidyl-prolyl cis-trans isomerase H (CYP3), found in Mycosarcoma maydis (Corn smut fungus).